Here is a 263-residue protein sequence, read N- to C-terminus: Cytochrome c oxidase subunit 3 (263 aa).

A run of 7 helical transmembrane segments spans residues Ile-7–Leu-27, Phe-44–Ile-64, Gly-78–Leu-98, Leu-120–Phe-140, Gly-145–Ala-165, Val-191–Ile-211, and Ile-241–Tyr-261.

It belongs to the cytochrome c oxidase subunit 3 family. In terms of assembly, component of the cytochrome c oxidase (complex IV, CIV), a multisubunit enzyme composed of a catalytic core of 3 subunits and several supernumerary subunits. The complex exists as a monomer or a dimer and forms supercomplexes (SCs) in the inner mitochondrial membrane with ubiquinol-cytochrome c oxidoreductase (cytochrome b-c1 complex, complex III, CIII).

Its subcellular location is the mitochondrion inner membrane. It catalyses the reaction 4 Fe(II)-[cytochrome c] + O2 + 8 H(+)(in) = 4 Fe(III)-[cytochrome c] + 2 H2O + 4 H(+)(out). In terms of biological role, component of the cytochrome c oxidase, the last enzyme in the mitochondrial electron transport chain which drives oxidative phosphorylation. The respiratory chain contains 3 multisubunit complexes succinate dehydrogenase (complex II, CII), ubiquinol-cytochrome c oxidoreductase (cytochrome b-c1 complex, complex III, CIII) and cytochrome c oxidase (complex IV, CIV), that cooperate to transfer electrons derived from NADH and succinate to molecular oxygen, creating an electrochemical gradient over the inner membrane that drives transmembrane transport and the ATP synthase. Cytochrome c oxidase is the component of the respiratory chain that catalyzes the reduction of oxygen to water. Electrons originating from reduced cytochrome c in the intermembrane space (IMS) are transferred via the dinuclear copper A center (CU(A)) of subunit 2 and heme A of subunit 1 to the active site in subunit 1, a binuclear center (BNC) formed by heme A3 and copper B (CU(B)). The BNC reduces molecular oxygen to 2 water molecules using 4 electrons from cytochrome c in the IMS and 4 protons from the mitochondrial matrix. In Plasmodium vivax, this protein is Cytochrome c oxidase subunit 3 (COIII).